A 73-amino-acid chain; its full sequence is Neuropeptide-like protein 29 (73 aa).

Residues 1-22 (MISTSSILVLVVLLACFMAASA) form the signal peptide. 5 positions are modified to tyrosine amide: Y29, Y39, Y47, Y55, and Y63. W71 carries the post-translational modification Tryptophan amide.

The protein belongs to the YARP (YGGW-amide related peptide) family. Weakly or not expressed in absence of infection. Upon infection by D.coniospora, it is expressed in hypoderm. Also expressed in perivulval cells when D.coniospora spores adhere to this region. Expressed in hypodermis upon physical injury.

It localises to the secreted. Its function is as follows. Antimicrobial peptides that have antibacterial activity against the Gram-negative bacteria S.marcescens. Has antifungal activity against D.coniospora. May play a role in response to physical injury and osmotic stress. Through the neuropeptide receptor nlp-29, induces sleep upon activation of the innate immune response to molting and injury to the adult epidermis. The protein is Neuropeptide-like protein 29 of Caenorhabditis elegans.